A 422-amino-acid chain; its full sequence is Serine--tRNA ligase (422 aa).

229 to 231 (TAE) provides a ligand contact to L-serine. 260–262 (RAE) provides a ligand contact to ATP. Glu283 is a binding site for L-serine. 347 to 350 (EISS) contributes to the ATP binding site. Position 383 (Ser383) interacts with L-serine.

This sequence belongs to the class-II aminoacyl-tRNA synthetase family. Type-1 seryl-tRNA synthetase subfamily. As to quaternary structure, homodimer. The tRNA molecule binds across the dimer.

It localises to the cytoplasm. The enzyme catalyses tRNA(Ser) + L-serine + ATP = L-seryl-tRNA(Ser) + AMP + diphosphate + H(+). It catalyses the reaction tRNA(Sec) + L-serine + ATP = L-seryl-tRNA(Sec) + AMP + diphosphate + H(+). Its pathway is aminoacyl-tRNA biosynthesis; selenocysteinyl-tRNA(Sec) biosynthesis; L-seryl-tRNA(Sec) from L-serine and tRNA(Sec): step 1/1. Functionally, catalyzes the attachment of serine to tRNA(Ser). Is also able to aminoacylate tRNA(Sec) with serine, to form the misacylated tRNA L-seryl-tRNA(Sec), which will be further converted into selenocysteinyl-tRNA(Sec). In Halothermothrix orenii (strain H 168 / OCM 544 / DSM 9562), this protein is Serine--tRNA ligase.